The primary structure comprises 359 residues: Fructose-bisphosphate aldolase class 2 (359 aa).

S62 is a D-glyceraldehyde 3-phosphate binding site. Catalysis depends on D110, which acts as the Proton donor. Zn(2+) is bound by residues H111, D145, E175, and H227. Dihydroxyacetone phosphate is bound at residue G228. Residue H265 coordinates Zn(2+). Residues 266-268 and 287-290 contribute to the dihydroxyacetone phosphate site; these read GGS and NIDT.

Belongs to the class II fructose-bisphosphate aldolase family. The cofactor is Zn(2+).

It carries out the reaction beta-D-fructose 1,6-bisphosphate = D-glyceraldehyde 3-phosphate + dihydroxyacetone phosphate. Its pathway is carbohydrate degradation; glycolysis; D-glyceraldehyde 3-phosphate and glycerone phosphate from D-glucose: step 4/4. Its function is as follows. Catalyzes the aldol condensation of dihydroxyacetone phosphate (DHAP or glycerone-phosphate) with glyceraldehyde 3-phosphate (G3P) to form fructose 1,6-bisphosphate (FBP) in gluconeogenesis and the reverse reaction in glycolysis. The polypeptide is Fructose-bisphosphate aldolase class 2 (fbaA) (Buchnera aphidicola subsp. Baizongia pistaciae (strain Bp)).